We begin with the raw amino-acid sequence, 400 residues long: Nicotinate phosphoribosyltransferase (400 aa).

Residue histidine 220 is modified to Phosphohistidine; by autocatalysis.

Belongs to the NAPRTase family. In terms of processing, transiently phosphorylated on a His residue during the reaction cycle. Phosphorylation strongly increases the affinity for substrates and increases the rate of nicotinate D-ribonucleotide production. Dephosphorylation regenerates the low-affinity form of the enzyme, leading to product release.

The enzyme catalyses nicotinate + 5-phospho-alpha-D-ribose 1-diphosphate + ATP + H2O = nicotinate beta-D-ribonucleotide + ADP + phosphate + diphosphate. It functions in the pathway cofactor biosynthesis; NAD(+) biosynthesis; nicotinate D-ribonucleotide from nicotinate: step 1/1. In terms of biological role, catalyzes the synthesis of beta-nicotinate D-ribonucleotide from nicotinate and 5-phospho-D-ribose 1-phosphate at the expense of ATP. The protein is Nicotinate phosphoribosyltransferase of Salmonella typhi.